A 511-amino-acid chain; its full sequence is 3-octaprenyl-4-hydroxybenzoate carboxy-lyase (511 aa).

Asparagine 176 is a Mn(2+) binding site. Prenylated FMN is bound by residues 179-181 (IYR), 193-195 (RWL), and 198-199 (RG). Glutamate 242 is a binding site for Mn(2+). Aspartate 311 serves as the catalytic Proton donor.

It belongs to the UbiD family. Homohexamer. Prenylated FMN serves as cofactor. The cofactor is Mn(2+).

Its subcellular location is the cell membrane. It carries out the reaction a 4-hydroxy-3-(all-trans-polyprenyl)benzoate + H(+) = a 2-(all-trans-polyprenyl)phenol + CO2. It participates in cofactor biosynthesis; ubiquinone biosynthesis. Its function is as follows. Catalyzes the decarboxylation of 3-octaprenyl-4-hydroxy benzoate to 2-octaprenylphenol, an intermediate step in ubiquinone biosynthesis. This Laribacter hongkongensis (strain HLHK9) protein is 3-octaprenyl-4-hydroxybenzoate carboxy-lyase.